Reading from the N-terminus, the 295-residue chain is Ribosomal RNA small subunit methyltransferase A (295 aa).

Residues Asn28, Leu30, Gly55, Glu76, Asp101, and Asn131 each coordinate S-adenosyl-L-methionine.

Belongs to the class I-like SAM-binding methyltransferase superfamily. rRNA adenine N(6)-methyltransferase family. RsmA subfamily.

The protein resides in the cytoplasm. The catalysed reaction is adenosine(1518)/adenosine(1519) in 16S rRNA + 4 S-adenosyl-L-methionine = N(6)-dimethyladenosine(1518)/N(6)-dimethyladenosine(1519) in 16S rRNA + 4 S-adenosyl-L-homocysteine + 4 H(+). Its function is as follows. Specifically dimethylates two adjacent adenosines (A1518 and A1519) in the loop of a conserved hairpin near the 3'-end of 16S rRNA in the 30S particle. May play a critical role in biogenesis of 30S subunits. The chain is Ribosomal RNA small subunit methyltransferase A from Pelotomaculum thermopropionicum (strain DSM 13744 / JCM 10971 / SI).